A 167-amino-acid polypeptide reads, in one-letter code: Crossover junction endodeoxyribonuclease RuvC (167 aa).

Catalysis depends on residues D14, E75, and D147. Positions 14, 75, and 147 each coordinate Mg(2+).

The protein belongs to the RuvC family. As to quaternary structure, homodimer which binds Holliday junction (HJ) DNA. The HJ becomes 2-fold symmetrical on binding to RuvC with unstacked arms; it has a different conformation from HJ DNA in complex with RuvA. In the full resolvosome a probable DNA-RuvA(4)-RuvB(12)-RuvC(2) complex forms which resolves the HJ. The cofactor is Mg(2+).

The protein resides in the cytoplasm. The catalysed reaction is Endonucleolytic cleavage at a junction such as a reciprocal single-stranded crossover between two homologous DNA duplexes (Holliday junction).. Its function is as follows. The RuvA-RuvB-RuvC complex processes Holliday junction (HJ) DNA during genetic recombination and DNA repair. Endonuclease that resolves HJ intermediates. Cleaves cruciform DNA by making single-stranded nicks across the HJ at symmetrical positions within the homologous arms, yielding a 5'-phosphate and a 3'-hydroxyl group; requires a central core of homology in the junction. The consensus cleavage sequence is 5'-(A/T)TT(C/G)-3'. Cleavage occurs on the 3'-side of the TT dinucleotide at the point of strand exchange. HJ branch migration catalyzed by RuvA-RuvB allows RuvC to scan DNA until it finds its consensus sequence, where it cleaves and resolves the cruciform DNA. The sequence is that of Crossover junction endodeoxyribonuclease RuvC from Synechocystis sp. (strain ATCC 27184 / PCC 6803 / Kazusa).